Here is a 123-residue protein sequence, read N- to C-terminus: Large ribosomal subunit protein uL24 (123 aa).

This sequence belongs to the universal ribosomal protein uL24 family. As to quaternary structure, part of the 50S ribosomal subunit.

Its function is as follows. One of two assembly initiator proteins, it binds directly to the 5'-end of the 23S rRNA, where it nucleates assembly of the 50S subunit. In terms of biological role, one of the proteins that surrounds the polypeptide exit tunnel on the outside of the subunit. The sequence is that of Large ribosomal subunit protein uL24 from Solibacter usitatus (strain Ellin6076).